A 612-amino-acid chain; its full sequence is Peroxisomal carnitine O-octanoyltransferase (612 aa).

Position 1 is an N-acetylmethionine (Met1). Lys40 and Lys57 each carry N6-succinyllysine. The active-site Proton acceptor is the His327. Residues Lys406 and 410 to 417 each bind CoA; that span reads KNKMLHPD. At Lys406 the chain carries N6-acetyllysine; alternate. Lys406 carries the post-translational modification N6-succinyllysine; alternate. The (R)-carnitine site is built by Tyr439, Thr441, and Thr452. Residues 610-612 carry the Microbody targeting signal motif; sequence THL.

The protein belongs to the carnitine/choline acetyltransferase family. As to quaternary structure, monomer.

It localises to the peroxisome. It carries out the reaction octanoyl-CoA + (R)-carnitine = O-octanoyl-(R)-carnitine + CoA. It catalyses the reaction 4,8-dimethylnonanoyl-CoA + (R)-carnitine = O-4,8-dimethylnonanoyl-(R)-carnitine + CoA. The protein operates within lipid metabolism; fatty acid beta-oxidation. Its function is as follows. Beta-oxidation of fatty acids. The highest activity concerns the C6 to C10 chain length substrate. Converts the end product of pristanic acid beta oxidation, 4,8-dimethylnonanoyl-CoA, to its corresponding carnitine ester. This chain is Peroxisomal carnitine O-octanoyltransferase (CROT), found in Homo sapiens (Human).